A 155-amino-acid chain; its full sequence is Fibroblast growth factor 2 (155 aa).

Residues 1 to 9 constitute a propeptide that is removed on maturation; that stretch reads MAAGSITTL. Residues 1–20 are disordered; that stretch reads MAAGSITTLPALPEDGGSSA. N36 contributes to the heparin binding site. Positions 46 to 48 match the Cell attachment site; atypical motif; that stretch reads DGR. At Y82 the chain carries Phosphotyrosine; by TEC. The short motif at 88–90 is the Cell attachment site; atypical element; that stretch reads DGR. Residue K95 forms a Glycyl lysine isopeptide (Lys-Gly) (interchain with G-Cter in SUMO1) linkage. The interval 128–144 is heparin-binding; sequence KRTGQYKLGPKTGPGQK.

Belongs to the heparin-binding growth factors family. In terms of assembly, monomer. Homodimer. Interacts with FGFR1, FGFR2, FGFR3 and FGFR4. Affinity between fibroblast growth factors (FGFs) and their receptors is increased by heparan sulfate glycosaminoglycans that function as coreceptors. Interacts with CSPG4, FGFBP1 and TEC. Found in a complex with FGFBP1, FGF1 and FGF2. Interacts with FGFBP3. Interacts with integrin ITGAV:ITGB3; the interaction is required for FGF2 signaling. Interacts with SNORC (via the extracellular domain). Interacts with glypican GPC3. Phosphorylation at Tyr-82 regulates FGF2 unconventional secretion.

The protein localises to the secreted. It localises to the nucleus. Functionally, acts as a ligand for FGFR1, FGFR2, FGFR3 and FGFR4. Also acts as an integrin ligand which is required for FGF2 signaling. Binds to integrin ITGAV:ITGB3. Plays an important role in the regulation of cell survival, cell division, cell differentiation and cell migration. Functions as a potent mitogen in vitro. Can induce angiogenesis. Mediates phosphorylation of ERK1/2 and thereby promotes retinal lens fiber differentiation. The polypeptide is Fibroblast growth factor 2 (FGF2) (Ovis aries (Sheep)).